Reading from the N-terminus, the 234-residue chain is Protein spitz (234 aa).

The first 28 residues, 1-28 (MHSTMSVQHGLVALVLIGCLAHPWHVEA), serve as a signal peptide directing secretion. The Lumenal segment spans residues 29 to 143 (CSSRTVPKPR…RPRPMLEKAS (115 aa)). Residues 33–71 (TVPKPRSSISSSMSGTALPPTQAPVTSSTTMRTTTTTTP) are disordered. The span at 56 to 71 (PVTSSTTMRTTTTTTP) shows a compositional bias: low complexity. N-linked (GlcNAc...) asparagine glycosylation is present at asparagine 74. The EGF-like domain occupies 78-122 (PTYKCPETFDAWYCLNDAHCFAVKIADLPVYSCECAIGFMGQRCE). Intrachain disulfides connect cysteine 82–cysteine 97, cysteine 91–cysteine 110, and cysteine 112–cysteine 121. The helical transmembrane segment at 144–164 (IASGAMCALVFMLFVCLAFYL) threads the bilayer. Residues 165 to 234 (RFEQRAAKKA…SFAIRRSNKL (70 aa)) lie on the Cytoplasmic side of the membrane.

As to quaternary structure, interacts with Star via the lumenal domain. Post-translationally, proteolytic processing by Rhomboid occurs in the Golgi. Cleavage takes place within the transmembrane domain close to residue 144 and the active growth factor is released. N-glycosylated and O-glycosylated. In terms of tissue distribution, expressed throughout the embryo.

The protein resides in the cell membrane. The protein localises to the endoplasmic reticulum membrane. It is found in the golgi apparatus membrane. In terms of biological role, ligand for the EGF receptor (Gurken). Involved in a number of unrelated developmental choices, for example, dorsal-ventral axis formation, glial migration, sensory organ determination, and muscle development. It is required for photoreceptor determination. The chain is Protein spitz (spi) from Drosophila melanogaster (Fruit fly).